We begin with the raw amino-acid sequence, 247 residues long: Adenylyl-sulfate kinase (247 aa).

Positions 1 to 24 (MSQSNSDDSASSSTQQAGDGQDDV) are disordered. ATP is bound at residue 55-62 (GLSGCGKS). S146 (phosphoserine intermediate) is an active-site residue.

Belongs to the APS kinase family.

It catalyses the reaction adenosine 5'-phosphosulfate + ATP = 3'-phosphoadenylyl sulfate + ADP + H(+). Its pathway is sulfur metabolism; hydrogen sulfide biosynthesis; sulfite from sulfate: step 2/3. Its function is as follows. Catalyzes the synthesis of activated sulfate. This chain is Adenylyl-sulfate kinase, found in Rhodopirellula baltica (strain DSM 10527 / NCIMB 13988 / SH1).